The sequence spans 264 residues: 3-methyl-2-oxobutanoate hydroxymethyltransferase (264 aa).

Residues Asp45 and Asp84 each contribute to the Mg(2+) site. 3-methyl-2-oxobutanoate-binding positions include 45–46 (DS), Asp84, and Lys112. Glu114 lines the Mg(2+) pocket. Catalysis depends on Glu181, which acts as the Proton acceptor.

The protein belongs to the PanB family. As to quaternary structure, homodecamer; pentamer of dimers. Mg(2+) is required as a cofactor.

It is found in the cytoplasm. The enzyme catalyses 3-methyl-2-oxobutanoate + (6R)-5,10-methylene-5,6,7,8-tetrahydrofolate + H2O = 2-dehydropantoate + (6S)-5,6,7,8-tetrahydrofolate. The protein operates within cofactor biosynthesis; (R)-pantothenate biosynthesis; (R)-pantoate from 3-methyl-2-oxobutanoate: step 1/2. Functionally, catalyzes the reversible reaction in which hydroxymethyl group from 5,10-methylenetetrahydrofolate is transferred onto alpha-ketoisovalerate to form ketopantoate. The protein is 3-methyl-2-oxobutanoate hydroxymethyltransferase of Cronobacter sakazakii (strain ATCC BAA-894) (Enterobacter sakazakii).